A 356-amino-acid polypeptide reads, in one-letter code: Tyrosine recombinase XerS (356 aa).

The 106-residue stretch at Val-16–Thr-121 folds into the Core-binding (CB) domain. One can recognise a Tyr recombinase domain in the interval Gly-169–Asp-354. Catalysis depends on residues Arg-210, Lys-234, His-306, Arg-309, and His-332. Residue Tyr-341 is the O-(3'-phospho-DNA)-tyrosine intermediate of the active site.

This sequence belongs to the 'phage' integrase family. XerS subfamily.

The protein localises to the cytoplasm. FtsK is required for recombination. Functionally, site-specific tyrosine recombinase, which acts by catalyzing the cutting and rejoining of the recombining DNA molecules. Essential to convert dimers of the bacterial chromosome into monomers to permit their segregation at cell division. The sequence is that of Tyrosine recombinase XerS from Lactococcus lactis subsp. cremoris (strain SK11).